The primary structure comprises 55 residues: ATP synthase F(0) complex subunit 8 (55 aa).

Residues 7–24 (NPWFYIMLMSWLTFSLII) form a helical membrane-spanning segment. A disordered region spans residues 35-55 (NPPSNKTSTTTRTLPWTWPWT). Low complexity predominate over residues 41-55 (TSTTTRTLPWTWPWT).

This sequence belongs to the ATPase protein 8 family. Component of the ATP synthase complex composed at least of ATP5F1A/subunit alpha, ATP5F1B/subunit beta, ATP5MC1/subunit c (homooctomer), MT-ATP6/subunit a, MT-ATP8/subunit 8, ATP5ME/subunit e, ATP5MF/subunit f, ATP5MG/subunit g, ATP5MK/subunit k, ATP5MJ/subunit j, ATP5F1C/subunit gamma, ATP5F1D/subunit delta, ATP5F1E/subunit epsilon, ATP5PF/subunit F6, ATP5PB/subunit b, ATP5PD/subunit d, ATP5PO/subunit OSCP. ATP synthase complex consists of a soluble F(1) head domain (subunits alpha(3) and beta(3)) - the catalytic core - and a membrane F(0) domain - the membrane proton channel (subunits c, a, 8, e, f, g, k and j). These two domains are linked by a central stalk (subunits gamma, delta, and epsilon) rotating inside the F1 region and a stationary peripheral stalk (subunits F6, b, d, and OSCP).

It localises to the mitochondrion membrane. In terms of biological role, subunit 8, of the mitochondrial membrane ATP synthase complex (F(1)F(0) ATP synthase or Complex V) that produces ATP from ADP in the presence of a proton gradient across the membrane which is generated by electron transport complexes of the respiratory chain. ATP synthase complex consist of a soluble F(1) head domain - the catalytic core - and a membrane F(1) domain - the membrane proton channel. These two domains are linked by a central stalk rotating inside the F(1) region and a stationary peripheral stalk. During catalysis, ATP synthesis in the catalytic domain of F(1) is coupled via a rotary mechanism of the central stalk subunits to proton translocation. In vivo, can only synthesize ATP although its ATP hydrolase activity can be activated artificially in vitro. Part of the complex F(0) domain. This is ATP synthase F(0) complex subunit 8 from Corythaixoides concolor (Grey go-away-bird).